The sequence spans 245 residues: Probable ABC transporter ATP-binding protein p29 (245 aa).

An ABC transporter domain is found at 7 to 245 (LSFEKVSIIY…KEQLYKIYDN (239 aa)). Residue 39–46 (GKSGVGKS) participates in ATP binding.

This sequence belongs to the ABC transporter superfamily.

Functionally, part of a high-affinity transport system. This chain is Probable ABC transporter ATP-binding protein p29 (p29), found in Mycoplasma genitalium (strain ATCC 33530 / DSM 19775 / NCTC 10195 / G37) (Mycoplasmoides genitalium).